We begin with the raw amino-acid sequence, 78 residues long: Serine rich endogenous peptide 19 (78 aa).

The N-terminal stretch at 1-25 (MCNIVVFLLTLTLFLFSGLSNTAFA) is a signal peptide. An SCOOP motif motif is present at residues 50 to 64 (KIEVDGSCSRRAPGR). The short motif at 56 to 58 (SCS) is the SxS motif essential for MIK2 binding element. The disordered stretch occupies residues 57–78 (CSRRAPGRRRPPNRPPKPCTKP). Pro residues predominate over residues 69–78 (NRPPKPCTKP).

It belongs to the serine rich endogenous peptide (SCOOP) phytocytokine family. Interacts with MIK2 (via extracellular leucine-rich repeat domain); this interaction triggers the formation of complex between MIK2 and the BAK1/SERK3 and SERK4 coreceptors, and subsequent BAK1 activation by phosphorylation.

It localises to the cell membrane. It is found in the secreted. Its subcellular location is the extracellular space. The protein resides in the apoplast. Its function is as follows. Brassicaceae-specific phytocytokine (plant endogenous peptide released into the apoplast) perceived by MIK2 in a BAK1/SERK3 and SERK4 coreceptors-dependent manner, that modulates various physiological and antimicrobial processes including growth prevention and reactive oxygen species (ROS) response regulation. In Arabidopsis thaliana (Mouse-ear cress), this protein is Serine rich endogenous peptide 19.